The following is a 274-amino-acid chain: MMPLLLLILLSTRNLLGAAQSQESPVAGERRALDLTTVYVLPRSEPINATVEHKCREALASCYNGSEFQPLHDDGPIRPDPYRFSTMIRFKRSYGELPLPIELNDEFLEQLSLLHNNTDQLRVLLTLMRTSRASDWMSFLGGYTQCDAPKSVVFTCVESVCYEHDLMRLNYTTDLFTENVLGLDVSPPVLSVLVLLRNNHTKAESVVRVPTSSMSLLDGTYNLLRTILGHMSLDTDLIGVLRSYRDRFPAVFSVSDQIKITRQHYRPQYQRKRP.

An N-terminal signal peptide occupies residues 1 to 21 (MMPLLLLILLSTRNLLGAAQS). A gL betaherpesvirus-type domain is found at 51-251 (VEHKCREALA…RSYRDRFPAV (201 aa)). An intrachain disulfide couples cysteine 156 to cysteine 161.

It belongs to the herpesviridae glycoprotein L (gL) family. Betaherpesvirinae gL subfamily. In terms of assembly, interacts with glycoprotein H (gH); this interaction is necessary for the correct processing and cell surface expression of gH.

It is found in the virion membrane. It localises to the host cell membrane. The protein resides in the host Golgi apparatus. Its subcellular location is the host trans-Golgi network. Its function is as follows. The heterodimer glycoprotein H-glycoprotein L is required for the fusion of viral and plasma membranes leading to virus entry into the host cell. Acts as a functional inhibitor of gH and maintains gH in an inhibited form. Upon binding to host integrins, gL dissociates from gH leading to activation of the viral fusion glycoproteins gB and gH. The chain is Envelope glycoprotein L from Murid herpesvirus 1 (strain Smith) (MuHV-1).